A 109-amino-acid chain; its full sequence is Fluoride-specific ion channel FluC (109 aa).

The next 3 membrane-spanning stretches (helical) occupy residues 21–41 (LTLN…GFFV), 52–72 (ILFS…YFLY), and 84–104 (IIFF…GFWI).

The protein belongs to the fluoride channel Fluc/FEX (TC 1.A.43) family.

The protein resides in the cell inner membrane. The catalysed reaction is fluoride(in) = fluoride(out). Fluoride-specific ion channel. Important for reducing fluoride concentration in the cell, thus reducing its toxicity. The polypeptide is Fluoride-specific ion channel FluC (Prochlorococcus marinus (strain MIT 9301)).